The following is a 386-amino-acid chain: Probable magnesium transporter NIPA5 (386 aa).

The Extracellular segment spans residues 1 to 18; it reads MVYSSGSWRDAYKGMSSD. Residues 19 to 39 form a helical membrane-spanning segment; the sequence is NVKGLVLALSSSIFIGASFIV. At 40 to 61 the chain is on the cytoplasmic side; the sequence is KKKGLKKAGASGLRAGSGGYSY. Helical transmembrane passes span 62 to 82 and 83 to 103; these read LLEPLWWIGMITMIVGEIANF and AAYAFAPAILVTPLGALSIII. Topologically, residues 104-115 are cytoplasmic; that stretch reads SASLAHIILQEK. A helical membrane pass occupies residues 116 to 136; it reads LHTFGILGCALCIVGSVTIVL. Residues 137–157 lie on the Extracellular side of the membrane; it reads HAPQEQDIVSVLEVWNLATEP. A helical membrane pass occupies residues 158–178; it reads AFLFYAAAVVGAAIVLIVQFI. Topologically, residues 179–189 are cytoplasmic; sequence PLYGQSHVMVY. Residues 190–210 traverse the membrane as a helical segment; the sequence is IGVCSLIGSLSVMSVKALGIA. Residues 211–220 are Extracellular-facing; sequence LKLTFSGTNQ. The helical transmembrane segment at 221–241 threads the bilayer; it reads LGYPQTWVFTVIVLFCVITQM. The Cytoplasmic portion of the chain corresponds to 242–255; sequence NYLNKALDTFNTAV. Residues 256–276 form a helical membrane-spanning segment; sequence VSPIYYVMFTSLTILASVIMF. The Extracellular segment spans residues 277-283; sequence KDWDRQS. Residues 284-304 traverse the membrane as a helical segment; it reads GTQIMTELCGFVTILSGTFLL. Over 305-386 the chain is Cytoplasmic; sequence HTTTDMVDGE…LRRQESSLRS (82 aa). The segment at 352 to 386 is disordered; the sequence is RQESAKSPRPARQNKQLEDDLEAVPLRRQESSLRS. Residues 376–386 are compositionally biased toward basic and acidic residues; the sequence is PLRRQESSLRS.

This sequence belongs to the NIPA (TC 2.A.7) family. Homodimer.

It is found in the cell membrane. The protein localises to the early endosome. Functionally, acts as a Mg(2+) transporter. Can also transport other divalent cations such as Fe(2+), Sr(2+), Ba(2+), Mn(2+) and Co(2+) but to a much less extent than Mg(2+). The sequence is that of Probable magnesium transporter NIPA5 from Arabidopsis thaliana (Mouse-ear cress).